The primary structure comprises 319 residues: 1-aminocyclopropane-1-carboxylate oxidase (319 aa).

The Fe2OG dioxygenase domain occupies 153–253 (PTFGTKVSNY…RMSIASFYNP (101 aa)). H177, D179, and H234 together coordinate Fe cation.

It belongs to the iron/ascorbate-dependent oxidoreductase family. Requires Fe cation as cofactor.

The catalysed reaction is 1-aminocyclopropane-1-carboxylate + L-ascorbate + O2 = ethene + L-dehydroascorbate + hydrogen cyanide + CO2 + 2 H2O. Its pathway is alkene biosynthesis; ethylene biosynthesis via S-adenosyl-L-methionine; ethylene from S-adenosyl-L-methionine: step 2/2. This is 1-aminocyclopropane-1-carboxylate oxidase (ACO1) from Prunus mume (Japanese apricot).